The sequence spans 282 residues: Sulfur carrier protein FdhD (282 aa).

Cys-115 (cysteine persulfide intermediate) is an active-site residue.

The protein belongs to the FdhD family.

Its subcellular location is the cytoplasm. Required for formate dehydrogenase (FDH) activity. Acts as a sulfur carrier protein that transfers sulfur from IscS to the molybdenum cofactor prior to its insertion into FDH. The chain is Sulfur carrier protein FdhD from Streptomyces avermitilis (strain ATCC 31267 / DSM 46492 / JCM 5070 / NBRC 14893 / NCIMB 12804 / NRRL 8165 / MA-4680).